A 296-amino-acid chain; its full sequence is MAGPLQGGGARALDLLRGLPRVSLANLKPNPGSKKPERRPRGRRRGRKCGRGHKGERQRGTRPRLGFEGGQTPFYIRIPKYGFNEGHSFRRQYKPLSLNRLQYLIDLGRVDPSQPIDLTQLVNGRGVTIQPLKRDYGVQLVEEGADTFTAKVNIEVQLASELAIAAIEKNGGVVTTAFYDPRSLDIVCKPVPFFLRGQPIPKRMLPPEELVPYYTDAKNRGYLADPAKFPEARLELARKYGYILPDITKDELFKMLCTRKDPRQIFFGLAPGWVVNMADKKILKPTDENLLKYYTS.

A mitochondrion-targeting transit peptide spans 1-21 (MAGPLQGGGARALDLLRGLPR). Positions 22–66 (VSLANLKPNPGSKKPERRPRGRRRGRKCGRGHKGERQRGTRPRLG) are disordered. A compositionally biased stretch (basic residues) spans 36–52 (PERRPRGRRRGRKCGRG).

It belongs to the universal ribosomal protein uL15 family. As to quaternary structure, component of the mitochondrial large ribosomal subunit (mt-LSU). Mature mammalian 55S mitochondrial ribosomes consist of a small (28S) and a large (39S) subunit. The 28S small subunit contains a 12S ribosomal RNA (12S mt-rRNA) and 30 different proteins. The 39S large subunit contains a 16S rRNA (16S mt-rRNA), a copy of mitochondrial valine transfer RNA (mt-tRNA(Val)), which plays an integral structural role, and 52 different proteins.

The protein localises to the mitochondrion. The polypeptide is Large ribosomal subunit protein uL15m (MRPL15) (Homo sapiens (Human)).